A 244-amino-acid chain; its full sequence is Glucosamine-6-phosphate deaminase (244 aa).

Residue Asp67 is the Proton acceptor; for enolization step of the active site. Asn136 functions as the For ring-opening step in the catalytic mechanism. The Proton acceptor; for ring-opening step role is filled by His138. The active-site For ring-opening step is the Glu143.

The protein belongs to the glucosamine/galactosamine-6-phosphate isomerase family. NagB subfamily.

It catalyses the reaction alpha-D-glucosamine 6-phosphate + H2O = beta-D-fructose 6-phosphate + NH4(+). It functions in the pathway amino-sugar metabolism; N-acetylneuraminate degradation; D-fructose 6-phosphate from N-acetylneuraminate: step 5/5. Its function is as follows. Catalyzes the reversible isomerization-deamination of glucosamine 6-phosphate (GlcN6P) to form fructose 6-phosphate (Fru6P) and ammonium ion. This Clostridium botulinum (strain Loch Maree / Type A3) protein is Glucosamine-6-phosphate deaminase.